A 906-amino-acid polypeptide reads, in one-letter code: Translation initiation factor IF-2 (906 aa).

Disordered stretches follow at residues 134-250 and 269-317; these read RQRN…GSHV and HLSA…FERP. Positions 136-177 are enriched in basic and acidic residues; the sequence is RNLDEQQRLAESDRVRDEEIQRKRDEEQAAKDRAEAERKAAE. 2 stretches are compositionally biased toward low complexity: residues 178-232 and 287-305; these read EAAA…STPA and GRPGSSSSRRGNDNGRGSN. A tr-type G domain is found at 405 to 574; the sequence is TRPPVVTIMG…SLQAEVLELK (170 aa). Residues 414-421 form a G1 region; that stretch reads GHVDHGKT. 414 to 421 contributes to the GTP binding site; the sequence is GHVDHGKT. The interval 439–443 is G2; it reads GITQH. Residues 460 to 463 are G3; sequence DTPG. GTP is bound by residues 460–464 and 514–517; these read DTPGH and NKID. The interval 514–517 is G4; sequence NKID. A G5 region spans residues 550–552; that stretch reads SAK.

It belongs to the TRAFAC class translation factor GTPase superfamily. Classic translation factor GTPase family. IF-2 subfamily.

It is found in the cytoplasm. Its function is as follows. One of the essential components for the initiation of protein synthesis. Protects formylmethionyl-tRNA from spontaneous hydrolysis and promotes its binding to the 30S ribosomal subunits. Also involved in the hydrolysis of GTP during the formation of the 70S ribosomal complex. The polypeptide is Translation initiation factor IF-2 (Xanthomonas oryzae pv. oryzae (strain MAFF 311018)).